We begin with the raw amino-acid sequence, 242 residues long: 1-(5-phosphoribosyl)-5-[(5-phosphoribosylamino)methylideneamino] imidazole-4-carboxamide isomerase (242 aa).

Aspartate 8 (proton acceptor) is an active-site residue. The active-site Proton donor is aspartate 129.

It belongs to the HisA/HisF family.

It localises to the cytoplasm. It catalyses the reaction 1-(5-phospho-beta-D-ribosyl)-5-[(5-phospho-beta-D-ribosylamino)methylideneamino]imidazole-4-carboxamide = 5-[(5-phospho-1-deoxy-D-ribulos-1-ylimino)methylamino]-1-(5-phospho-beta-D-ribosyl)imidazole-4-carboxamide. Its pathway is amino-acid biosynthesis; L-histidine biosynthesis; L-histidine from 5-phospho-alpha-D-ribose 1-diphosphate: step 4/9. The sequence is that of 1-(5-phosphoribosyl)-5-[(5-phosphoribosylamino)methylideneamino] imidazole-4-carboxamide isomerase from Clostridium botulinum (strain Okra / Type B1).